The primary structure comprises 2878 residues: Trinucleotide repeat-containing gene 18 protein (2878 aa).

Disordered regions lie at residues 1–54 (MDGR…KYMA) and 102–194 (TQKD…SSRL). The span at 119 to 128 (TPSSRTPSGH) shows a compositional bias: polar residues. Composition is skewed to basic and acidic residues over residues 137-149 (SSREGTGKDRAGR), 158-169 (GKKDPRAREEVS), and 179-194 (QEARAEGRQDRGSSRL). The residue at position 199 (serine 199) is a Phosphoserine. 12 disordered regions span residues 259–289 (ARPCGSPLPPPPPLPPKGPPAPPSSTPAGVY), 313–442 (FDER…KWKP), 487–507 (MPRASATCGRPGADLHSAAHG), 540–655 (SPFG…DDEC), 865–1002 (AQEH…ALFT), 1033–1104 (ADGL…LESP), 1127–1146 (LEAQALSTAGPGCREPSEVS), 1171–1228 (LGTQ…DCDL), 1429–1535 (ELVK…DSSS), 1613–1668 (LGLS…DEDE), 1694–1718 (VPKNSKPATGPKLTKRGLAGPRTLK), and 1737–1787 (EARS…GEQA). The span at 264–283 (SPLPPPPPLPPKGPPAPPSS) shows a compositional bias: pro residues. 2 stretches are compositionally biased toward basic and acidic residues: residues 327–337 (RDVRAREREPG) and 350–362 (RLERPEVLREKSS). A compositionally biased stretch (low complexity) spans 376-390 (PPAARSSRSSPDARA). The segment covering 396–411 (ELLKPEADPRPCERAP) has biased composition (basic and acidic residues). Serine 540 carries the post-translational modification Phosphoserine. A Glycyl lysine isopeptide (Lys-Gly) (interchain with G-Cter in SUMO2) cross-link involves residue lysine 549. Composition is skewed to basic and acidic residues over residues 580–589 (LKRDPERPES) and 865–881 (AQEHRTEMEEKISKRSL). Residues 958–969 (SSPPPASPPPTP) show a composition bias toward pro residues. Over residues 972-993 (TRKEEAPENVVEKKDLELEKET) the composition is skewed to basic and acidic residues. 2 positions are modified to phosphoserine: serine 1053 and serine 1062. Residues 1068 to 1088 (EPPRDSPEEEQLADREVKAEV) are compositionally biased toward basic and acidic residues. Residues 1410–1442 (LDFRMRLAEVQRRYKEKQRELVKLQRRRDSGDR) adopt a coiled-coil conformation. Over residues 1429–1448 (ELVKLQRRRDSGDRHEDAHR) the composition is skewed to basic and acidic residues. The span at 1449-1463 (SLARRGPGRPRKRTH) shows a compositional bias: basic residues. Residue serine 1469 is modified to Phosphoserine. Residues 1478–1492 (SSSGKGLSSKSLLTS) show a composition bias toward low complexity. The span at 1745–1775 (SSEEDSFDQDDSSEEEEEELEEEEEDEEEEG) shows a compositional bias: acidic residues. Phosphoserine is present on residues serine 1789 and serine 1795. Over residues 1825–1835 (EQKARKKEERQ) the composition is skewed to basic and acidic residues. 3 disordered regions span residues 1825–2040 (EQKA…GAVS), 2052–2080 (FEANQDSSFSEDEHLPRGGATERPLTPAP), and 2226–2681 (LLVP…RLPS). A compositionally biased stretch (low complexity) spans 1876–1890 (AAPGPGSRASGPSSP). 4 stretches are compositionally biased toward basic and acidic residues: residues 1891 to 1900 (DKAKLVSEKG), 1925 to 1936 (LWTRRRSERIFL), 1966 to 1978 (PRKDTGRAKDRKD), and 2024 to 2034 (RGKEAKKENRG). A Phosphothreonine modification is found at threonine 2077. A compositionally biased stretch (basic and acidic residues) spans 2238–2247 (TSKDTGEVKE). Residues 2261–2270 (ARGRGRKPST) are compositionally biased toward basic residues. Basic and acidic residues-rich tracts occupy residues 2307 to 2316 (STPEPVDKRA) and 2409 to 2419 (AKEALLLREDP). 3 stretches are compositionally biased toward low complexity: residues 2460 to 2470 (EPGPGLPLEDP), 2491 to 2520 (TTSSSSSSSSSSSSSSSSSSSSSSSSSGSE), and 2540 to 2578 (RTCSAASSRASSPASSSSSSSSSSSSSSSSSSSSSSSST). Acidic residues predominate over residues 2579-2591 (TDEDSSCSSDEEA). A compositionally biased stretch (pro residues) spans 2631 to 2641 (TQPPPQPPPQP). Position 2681 is a phosphoserine (serine 2681). Positions 2727–2872 (EMIRIGDCAV…PTTGMIFSTD (146 aa)) constitute a BAH domain.

This chain is Trinucleotide repeat-containing gene 18 protein (Tnrc18), found in Mus musculus (Mouse).